The following is a 434-amino-acid chain: Homogentisate 1,2-dioxygenase (434 aa).

The Proton acceptor role is filled by His289. Residues His332 and Glu338 each coordinate Fe cation. Homogentisate-binding residues include Tyr347 and His368. His368 contributes to the Fe cation binding site.

It belongs to the homogentisate dioxygenase family. Hexamer; dimer of trimers. It depends on Fe cation as a cofactor.

The enzyme catalyses homogentisate + O2 = 4-maleylacetoacetate + H(+). It functions in the pathway amino-acid degradation; L-phenylalanine degradation; acetoacetate and fumarate from L-phenylalanine: step 4/6. In terms of biological role, involved in the catabolism of homogentisate (2,5-dihydroxyphenylacetate or 2,5-OH-PhAc), a central intermediate in the degradation of phenylalanine and tyrosine. Catalyzes the oxidative ring cleavage of the aromatic ring of homogentisate to yield maleylacetoacetate. The chain is Homogentisate 1,2-dioxygenase from Pseudomonas syringae pv. syringae (strain B728a).